We begin with the raw amino-acid sequence, 440 residues long: Glycerate 2-kinase (440 aa).

Substrate is bound at residue Lys58.

Belongs to the glycerate kinase type-1 family. Homodimer. Mg(2+) serves as cofactor. Requires Ni(2+) as cofactor. It depends on Mn(2+) as a cofactor. The cofactor is Co(2+).

It carries out the reaction (R)-glycerate + ATP = (2R)-2-phosphoglycerate + ADP + H(+). Catalyzes the ATP-dependent phosphorylation of D-glycerate to 2-phosphoglycerate. It can also utilize GTP, CTP, UTP, ADP or pyrophosphate as phosphate donor. The chain is Glycerate 2-kinase (gck) from Pyrococcus horikoshii (strain ATCC 700860 / DSM 12428 / JCM 9974 / NBRC 100139 / OT-3).